A 192-amino-acid polypeptide reads, in one-letter code: MKRRLYLSSSSPRRKELLDQAGIPFDLVNAPVEETGLPNESPESFVLRMAVEKALSGFNKVPGKNVWVLGSDTIILKDGKVFGKPKHKMDAYRMLMSFSGEEHTVMTSIAIVNDGAVYSDVCQTNVFFRPISDSEFEQYWATGEAEDKAGAYGIQGQAAKFIEKIEGSYSAVMGLPLYELDKLLRESNFYSE.

The active-site Proton acceptor is D72.

This sequence belongs to the Maf family. YhdE subfamily. A divalent metal cation serves as cofactor.

It localises to the cytoplasm. The enzyme catalyses dTTP + H2O = dTMP + diphosphate + H(+). The catalysed reaction is UTP + H2O = UMP + diphosphate + H(+). Nucleoside triphosphate pyrophosphatase that hydrolyzes dTTP and UTP. May have a dual role in cell division arrest and in preventing the incorporation of modified nucleotides into cellular nucleic acids. The chain is dTTP/UTP pyrophosphatase from Hydrogenovibrio crunogenus (strain DSM 25203 / XCL-2) (Thiomicrospira crunogena).